The primary structure comprises 812 residues: Leucine--tRNA ligase (812 aa).

The 'HIGH' region signature appears at 40–51 (SYPSGSNLHAGH). A 'KMSKS' region motif is present at residues 572 to 576 (KMSKS). Residue K575 coordinates ATP.

Belongs to the class-I aminoacyl-tRNA synthetase family.

It is found in the cytoplasm. It catalyses the reaction tRNA(Leu) + L-leucine + ATP = L-leucyl-tRNA(Leu) + AMP + diphosphate. In Clostridium tetani (strain Massachusetts / E88), this protein is Leucine--tRNA ligase.